The primary structure comprises 285 residues: MAAELKTITVLGAGGKMGMRISANFQKSDYQVFYCENSPRAQEQVVAAGRELSIAEQVIPESDVVILAVPDIALKAVSGIVVPQMKSNAVLLTLDPAAAYANLIAKRDDIDYAVAHPCHPSVFLDRFTPEEHADAFGGVAAPQHVAASYETGSDEQKATLARVVKVMYGPVIDVHWVTVKQLAYLEPTLVETVACMVGTLMKEALDETINTIGVPEAAAKAMLYGHIQIALAVAFRSTNPFSDACMIAIEYGKENIIKPDWKKIFDEKELDLVIAKMLKIDAIER.

NAD(+) is bound by residues 15-17, glutamate 36, and aspartate 71; that span reads GKM. Residues histidine 116 and glutamate 186 each contribute to the Zn(2+) site.

Belongs to the ApnO family. The cofactor is Zn(2+).

It catalyses the reaction D-apionate + NAD(+) = 3-oxoisoapionate + NADH + H(+). The protein operates within carbohydrate metabolism. Involved in catabolism of D-apiose. Catalyzes the conversion of D-apionate to 3-oxo-isoapionate. The chain is D-apionate oxidoisomerase from Pectobacterium atrosepticum (strain SCRI 1043 / ATCC BAA-672) (Erwinia carotovora subsp. atroseptica).